Consider the following 116-residue polypeptide: Large ribosomal subunit protein bL20 (116 aa).

This sequence belongs to the bacterial ribosomal protein bL20 family.

Binds directly to 23S ribosomal RNA and is necessary for the in vitro assembly process of the 50S ribosomal subunit. It is not involved in the protein synthesizing functions of that subunit. The sequence is that of Large ribosomal subunit protein bL20 (rplT) from Mycoplasmopsis fermentans (Mycoplasma fermentans).